The primary structure comprises 173 residues: Probable transcription termination protein NusA (173 aa).

The 67-residue stretch at aspartate 31 to asparagine 97 folds into the KH domain. Basic and acidic residues predominate over residues alanine 147–glutamate 162. The tract at residues alanine 147–glutamine 173 is disordered. Residues serine 163–glutamine 173 show a composition bias toward polar residues.

It belongs to the NusA family.

The protein resides in the cytoplasm. Its function is as follows. Participates in transcription termination. The protein is Probable transcription termination protein NusA of Methanococcus vannielii (strain ATCC 35089 / DSM 1224 / JCM 13029 / OCM 148 / SB).